Consider the following 365-residue polypeptide: Putrescine carbamoyltransferase (365 aa).

Carbamoyl phosphate-binding positions include 54–58 (STRTR), Arg-105, and His-132. Residue 277–280 (HCLP) coordinates putrescine.

The protein belongs to the aspartate/ornithine carbamoyltransferase superfamily. PTCase family. As to quaternary structure, homotrimer.

It is found in the cytoplasm. It catalyses the reaction carbamoyl phosphate + putrescine = N-carbamoylputrescine + phosphate + H(+). It participates in amine and polyamine biosynthesis; putrescine biosynthesis via agmatine pathway; putrescine from N-carbamoylputrescine (transferase route): step 1/1. Functionally, catalyzes the phosphorolysis of N-carbamoylputrescine to form carbamoyl phosphate and putrescine. Is involved in the degradation pathway of the polyamine agmatine. This is Putrescine carbamoyltransferase from Mycoplasma capricolum subsp. capricolum (strain California kid / ATCC 27343 / NCTC 10154).